The sequence spans 131 residues: Methylglyoxal synthase (131 aa).

Positions 1–131 (MKIALIAHDK…GDLDYRKLRK (131 aa)) constitute an MGS-like domain. Substrate is bound by residues His-8, Lys-12, 34 to 37 (TGTT), and 54 to 55 (SG). The Proton donor/acceptor role is filled by Asp-60. Position 87 (His-87) interacts with substrate.

This sequence belongs to the methylglyoxal synthase family.

It carries out the reaction dihydroxyacetone phosphate = methylglyoxal + phosphate. In terms of biological role, catalyzes the formation of methylglyoxal from dihydroxyacetone phosphate. The chain is Methylglyoxal synthase from Bacillus cereus (strain ATCC 14579 / DSM 31 / CCUG 7414 / JCM 2152 / NBRC 15305 / NCIMB 9373 / NCTC 2599 / NRRL B-3711).